A 126-amino-acid chain; its full sequence is Glycine cleavage system H protein (126 aa).

The region spanning 22–104 (TVTIGITEYA…YEKAWMVKVE (83 aa)) is the Lipoyl-binding domain. An N6-lipoyllysine modification is found at lysine 63.

It belongs to the GcvH family. In terms of assembly, the glycine cleavage system is composed of four proteins: P, T, L and H. (R)-lipoate serves as cofactor.

The glycine cleavage system catalyzes the degradation of glycine. The H protein shuttles the methylamine group of glycine from the P protein to the T protein. In terms of biological role, is also involved in protein lipoylation via its role as an octanoyl/lipoyl carrier protein intermediate. This is Glycine cleavage system H protein from Staphylococcus saprophyticus subsp. saprophyticus (strain ATCC 15305 / DSM 20229 / NCIMB 8711 / NCTC 7292 / S-41).